The sequence spans 137 residues: Nucleoside diphosphate kinase (137 aa).

ATP contacts are provided by lysine 9, phenylalanine 57, arginine 85, threonine 91, arginine 102, and asparagine 112. Catalysis depends on histidine 115, which acts as the Pros-phosphohistidine intermediate.

Belongs to the NDK family. As to quaternary structure, homotetramer. The cofactor is Mg(2+).

The protein localises to the cytoplasm. It carries out the reaction a 2'-deoxyribonucleoside 5'-diphosphate + ATP = a 2'-deoxyribonucleoside 5'-triphosphate + ADP. It catalyses the reaction a ribonucleoside 5'-diphosphate + ATP = a ribonucleoside 5'-triphosphate + ADP. Its function is as follows. Major role in the synthesis of nucleoside triphosphates other than ATP. The ATP gamma phosphate is transferred to the NDP beta phosphate via a ping-pong mechanism, using a phosphorylated active-site intermediate. This chain is Nucleoside diphosphate kinase, found in Campylobacter fetus subsp. fetus (strain 82-40).